Consider the following 78-residue polypeptide: DNA-directed RNA polymerase subunit omega (78 aa).

This sequence belongs to the RNA polymerase subunit omega family. In terms of assembly, in cyanobacteria the RNAP catalytic core is composed of 2 alpha, 1 beta, 1 beta', 1 gamma and 1 omega subunit. When a sigma factor is associated with the core the holoenzyme is formed, which can initiate transcription.

The enzyme catalyses RNA(n) + a ribonucleoside 5'-triphosphate = RNA(n+1) + diphosphate. Functionally, promotes RNA polymerase assembly. Latches the N- and C-terminal regions of the beta' subunit thereby facilitating its interaction with the beta and alpha subunits. The protein is DNA-directed RNA polymerase subunit omega of Prochlorococcus marinus (strain MIT 9515).